Here is a 1630-residue protein sequence, read N- to C-terminus: Separin (1630 aa).

The disordered stretch occupies residues 1016 to 1037; sequence SKHSTGLKLCDSPRSSSMTPRG. Residues 1443–1542 enclose the Peptidase C50 domain; it reads EDNISMILNP…SAAMKYYGKL (100 aa). Cys-1531 is an active-site residue.

May bind calcium. Interacts with PDS1. Interacts with MCD1.

It is found in the nucleus. Its subcellular location is the cytoplasm. The protein resides in the cytoskeleton. It localises to the microtubule organizing center. The protein localises to the spindle pole body. It carries out the reaction All bonds known to be hydrolyzed by this endopeptidase have arginine in P1 and an acidic residue in P4. P6 is often occupied by an acidic residue or by a hydroxy-amino-acid residue, the phosphorylation of which enhances cleavage.. With respect to regulation, it is inactivated via its interaction with PDS1, which probably covers its active site. PDS1 degradation at anaphase, liberates it and triggers MCD1 cleavage. Functionally, caspase-like protease, which plays a central role in the chromosome segregation by cleaving the MCD1/SCC1 subunit of the cohesin complex at the onset of anaphase. During most of the cell cycle, it is inactivated by securin/PDS1 protein. It also promotes anaphase spindle elongation. A component of the FEAR (CDC14 early anaphase release) network which promotes CDC14 release from the nucleolus during early anaphase. Cleaves SLK19. The sequence is that of Separin (ESP1) from Saccharomyces cerevisiae (strain ATCC 204508 / S288c) (Baker's yeast).